The chain runs to 370 residues: Platelet-derived growth factor D (370 aa).

The signal sequence occupies residues 1–18; that stretch reads MHRLIFVYTLICANFCSC. In terms of domain architecture, CUB spans 52 to 170; it reads RDETIQVKGN…PGFKIYYSLL (119 aa). A disulfide bridge links cysteine 109 with cysteine 131. Asparagine 276 carries an N-linked (GlcNAc...) asparagine glycan. 2 disulfides stabilise this stretch: cysteine 302-cysteine 360 and cysteine 306-cysteine 362.

Belongs to the PDGF/VEGF growth factor family. As to quaternary structure, homodimer; disulfide-linked. Interacts with PDGFRB homodimers, and with heterodimers formed by PDGFRA and PDGFRB. Activated by proteolytic cleavage. Proteolytic removal of the N-terminal CUB domain releasing the core domain is necessary for unmasking the receptor-binding epitopes of the core domain. Cleavage after Arg-247 or Arg-249 by urokinase plasminogen activator gives rise to the active form. Expressed at high levels in the heart, pancreas, adrenal gland and ovary and at low levels in placenta, liver, kidney, prostate, testis, small intestine, spleen and colon. In the kidney, expressed by the visceral epithelial cells of the glomeruli. A widespread expression is also seen in the medial smooth muscle cells of arteries and arterioles, as well as in smooth muscle cells of vasa rectae in the medullary area. Expressed in the adventitial connective tissue surrounding the suprarenal artery. In chronic obstructive nephropathy, a persistent expression is seen in glomerular visceral epithelial cells and vascular smooth muscle cells, as well as de novo expression by periglomerular interstitial cells and by some neointimal cells of atherosclerotic vessels. Expression in normal prostate is seen preferentially in the mesenchyme of the gland while expression is increased and more profuse in prostate carcinoma. Expressed in many ovarian, lung, renal and brain cancer-derived cell lines.

The protein localises to the secreted. Its function is as follows. Growth factor that plays an essential role in the regulation of embryonic development, cell proliferation, cell migration, survival and chemotaxis. Potent mitogen for cells of mesenchymal origin. Plays an important role in wound healing. Induces macrophage recruitment, increased interstitial pressure, and blood vessel maturation during angiogenesis. Can initiate events that lead to a mesangial proliferative glomerulonephritis, including influx of monocytes and macrophages and production of extracellular matrix. This is Platelet-derived growth factor D (PDGFD) from Homo sapiens (Human).